A 256-amino-acid polypeptide reads, in one-letter code: 1-(5-phosphoribosyl)-5-[(5-phosphoribosylamino)methylideneamino] imidazole-4-carboxamide isomerase (256 aa).

Asp8 (proton acceptor) is an active-site residue. Asp130 acts as the Proton donor in catalysis.

The protein belongs to the HisA/HisF family.

Its subcellular location is the cytoplasm. The enzyme catalyses 1-(5-phospho-beta-D-ribosyl)-5-[(5-phospho-beta-D-ribosylamino)methylideneamino]imidazole-4-carboxamide = 5-[(5-phospho-1-deoxy-D-ribulos-1-ylimino)methylamino]-1-(5-phospho-beta-D-ribosyl)imidazole-4-carboxamide. The protein operates within amino-acid biosynthesis; L-histidine biosynthesis; L-histidine from 5-phospho-alpha-D-ribose 1-diphosphate: step 4/9. This Chlorobium phaeovibrioides (strain DSM 265 / 1930) (Prosthecochloris vibrioformis (strain DSM 265)) protein is 1-(5-phosphoribosyl)-5-[(5-phosphoribosylamino)methylideneamino] imidazole-4-carboxamide isomerase.